The sequence spans 954 residues: Glycine dehydrogenase (decarboxylating) (954 aa).

N6-(pyridoxal phosphate)lysine is present on lysine 706.

The protein belongs to the GcvP family. The glycine cleavage system is composed of four proteins: P, T, L and H. Pyridoxal 5'-phosphate is required as a cofactor.

The enzyme catalyses N(6)-[(R)-lipoyl]-L-lysyl-[glycine-cleavage complex H protein] + glycine + H(+) = N(6)-[(R)-S(8)-aminomethyldihydrolipoyl]-L-lysyl-[glycine-cleavage complex H protein] + CO2. In terms of biological role, the glycine cleavage system catalyzes the degradation of glycine. The P protein binds the alpha-amino group of glycine through its pyridoxal phosphate cofactor; CO(2) is released and the remaining methylamine moiety is then transferred to the lipoamide cofactor of the H protein. The polypeptide is Glycine dehydrogenase (decarboxylating) (Pseudomonas syringae pv. syringae (strain B728a)).